Consider the following 151-residue polypeptide: Deoxyuridine 5'-triphosphate nucleotidohydrolase (151 aa).

Residues 70–72, Asn83, 87–89, and Met97 contribute to the substrate site; these read RSG and LID.

This sequence belongs to the dUTPase family. It depends on Mg(2+) as a cofactor.

The enzyme catalyses dUTP + H2O = dUMP + diphosphate + H(+). The protein operates within pyrimidine metabolism; dUMP biosynthesis; dUMP from dCTP (dUTP route): step 2/2. Its function is as follows. This enzyme is involved in nucleotide metabolism: it produces dUMP, the immediate precursor of thymidine nucleotides and it decreases the intracellular concentration of dUTP so that uracil cannot be incorporated into DNA. This chain is Deoxyuridine 5'-triphosphate nucleotidohydrolase, found in Pseudomonas syringae pv. tomato (strain ATCC BAA-871 / DC3000).